Reading from the N-terminus, the 310-residue chain is Probable deoxyhypusine synthase (310 aa).

The active-site Nucleophile is lysine 284.

The protein belongs to the deoxyhypusine synthase family. NAD(+) is required as a cofactor.

It catalyses the reaction [eIF5A protein]-L-lysine + spermidine = [eIF5A protein]-deoxyhypusine + propane-1,3-diamine. The protein operates within protein modification; eIF5A hypusination. Catalyzes the NAD-dependent oxidative cleavage of spermidine and the subsequent transfer of the butylamine moiety of spermidine to the epsilon-amino group of a specific lysine residue of the eIF-5A precursor protein to form the intermediate deoxyhypusine residue. The chain is Probable deoxyhypusine synthase (dys) from Thermoplasma acidophilum (strain ATCC 25905 / DSM 1728 / JCM 9062 / NBRC 15155 / AMRC-C165).